We begin with the raw amino-acid sequence, 202 residues long: MATIVQCLSSCATLESQFKVLSLKGISCSSPSSSFSNRRGASATLSSSLSFSQSVSQCVAFSTGNLWVQKPMRQLIVCEAAAPTKKADSAAKRARQAEKRRVYNKSKKSEARTRMKKVLEALEGLKKKTDAQADEIVTVEKLIGEAYSAIDKAVKVKALHKNTGARRKSRLARRKKAVEIHHGWYVPDAAAAAPSEAVPMAA.

The transit peptide at Met1 to Glu79 directs the protein to the chloroplast. A disordered region spans residues Ser89–Glu110.

This sequence belongs to the bacterial ribosomal protein bS20 family. As to quaternary structure, part of the 30S ribosomal subunit.

The protein localises to the plastid. The protein resides in the chloroplast. Binds directly to 16S ribosomal RNA. In Arabidopsis thaliana (Mouse-ear cress), this protein is Small ribosomal subunit protein bS20c (RPS20).